Reading from the N-terminus, the 383-residue chain is Serine protease 23 (383 aa).

The first 23 residues, M1–P23, serve as a signal peptide directing secretion. An N-linked (GlcNAc...) asparagine glycan is attached at N93. C160 and C176 form a disulfide bridge. The active-site Charge relay system is the H175. N-linked (GlcNAc...) asparagine glycosylation occurs at N207. Residues D240 and S316 each act as charge relay system in the active site.

The protein belongs to the peptidase S1 family.

It is found in the secreted. This chain is Serine protease 23 (Prss23), found in Rattus norvegicus (Rat).